The chain runs to 233 residues: 7-cyano-7-deazaguanine synthase (233 aa).

Residue 8-18 participates in ATP binding; the sequence is LSGGLDSTTCM. Zn(2+) contacts are provided by Cys-186, Cys-194, Cys-197, and Cys-200.

This sequence belongs to the QueC family. In terms of assembly, homodimer. It depends on Zn(2+) as a cofactor.

The catalysed reaction is 7-carboxy-7-deazaguanine + NH4(+) + ATP = 7-cyano-7-deazaguanine + ADP + phosphate + H2O + H(+). It participates in purine metabolism; 7-cyano-7-deazaguanine biosynthesis. Its function is as follows. Catalyzes the ATP-dependent conversion of 7-carboxy-7-deazaguanine (CDG) to 7-cyano-7-deazaguanine (preQ(0)). The protein is 7-cyano-7-deazaguanine synthase of Desulfitobacterium hafniense (strain DSM 10664 / DCB-2).